The sequence spans 302 residues: Glycine--tRNA ligase alpha subunit (302 aa).

The protein belongs to the class-II aminoacyl-tRNA synthetase family. Tetramer of two alpha and two beta subunits.

It localises to the cytoplasm. It carries out the reaction tRNA(Gly) + glycine + ATP = glycyl-tRNA(Gly) + AMP + diphosphate. This chain is Glycine--tRNA ligase alpha subunit, found in Xanthomonas campestris pv. campestris (strain 8004).